An 83-amino-acid chain; its full sequence is Large ribosomal subunit protein bL31B (83 aa).

It belongs to the bacterial ribosomal protein bL31 family. Type B subfamily. In terms of assembly, part of the 50S ribosomal subunit.

The chain is Large ribosomal subunit protein bL31B from Lactobacillus gasseri (strain ATCC 33323 / DSM 20243 / BCRC 14619 / CIP 102991 / JCM 1131 / KCTC 3163 / NCIMB 11718 / NCTC 13722 / AM63).